We begin with the raw amino-acid sequence, 449 residues long: Glutamyl-tRNA(Gln) amidotransferase subunit A (449 aa).

Active-site charge relay system residues include Lys51 and Ser126. A disordered region spans residues 103 to 128 (STTESSAHGKTLNPVDSSRVPGGSSG). The span at 119-128 (SSRVPGGSSG) shows a compositional bias: low complexity. Ser150 acts as the Acyl-ester intermediate in catalysis.

It belongs to the amidase family. GatA subfamily. In terms of assembly, heterotrimer of A, B and C subunits.

It carries out the reaction L-glutamyl-tRNA(Gln) + L-glutamine + ATP + H2O = L-glutaminyl-tRNA(Gln) + L-glutamate + ADP + phosphate + H(+). In terms of biological role, allows the formation of correctly charged Gln-tRNA(Gln) through the transamidation of misacylated Glu-tRNA(Gln) in organisms which lack glutaminyl-tRNA synthetase. The reaction takes place in the presence of glutamine and ATP through an activated gamma-phospho-Glu-tRNA(Gln). In Wolinella succinogenes (strain ATCC 29543 / DSM 1740 / CCUG 13145 / JCM 31913 / LMG 7466 / NCTC 11488 / FDC 602W) (Vibrio succinogenes), this protein is Glutamyl-tRNA(Gln) amidotransferase subunit A.